The sequence spans 695 residues: Probable Rho-GTPase-activating protein 7 (695 aa).

The span at Met-1–Pro-11 shows a compositional bias: low complexity. Residues Met-1–Asp-26 form a disordered region. The F-BAR domain maps to Pro-33–Asp-307. The tract at residues Glu-320–Thr-499 is disordered. 2 stretches are compositionally biased toward polar residues: residues Pro-336–Lys-348 and Pro-366–Val-382. Low complexity-rich tracts occupy residues Ala-383 to Ser-432, Pro-458 to Ser-467, and Pro-488 to Thr-499. A phosphoserine mark is found at Ser-496 and Ser-497. The 187-residue stretch at Ala-506–Phe-692 folds into the Rho-GAP domain.

The polypeptide is Probable Rho-GTPase-activating protein 7 (rga7) (Schizosaccharomyces pombe (strain 972 / ATCC 24843) (Fission yeast)).